A 404-amino-acid chain; its full sequence is Serine/threonine transporter SstT (404 aa).

Transmembrane regions (helical) follow at residues isoleucine 10–alanine 30, alanine 53–glycine 73, isoleucine 81–tyrosine 101, alanine 140–leucine 160, alanine 177–valine 197, leucine 215–valine 235, isoleucine 287–leucine 307, and isoleucine 329–isoleucine 349.

This sequence belongs to the dicarboxylate/amino acid:cation symporter (DAACS) (TC 2.A.23) family.

The protein localises to the cell inner membrane. The enzyme catalyses L-serine(in) + Na(+)(in) = L-serine(out) + Na(+)(out). It catalyses the reaction L-threonine(in) + Na(+)(in) = L-threonine(out) + Na(+)(out). Its function is as follows. Involved in the import of serine and threonine into the cell, with the concomitant import of sodium (symport system). The chain is Serine/threonine transporter SstT from Glaesserella parasuis serovar 5 (strain SH0165) (Haemophilus parasuis).